A 798-amino-acid chain; its full sequence is Cold shock domain-containing protein E1 (798 aa).

In terms of domain architecture, CSD 1 spans 26-87 (ETGVIEKLLT…RTGKPIAIKL (62 aa)). Residue Lys81 is modified to N6-acetyllysine. Residue Lys91 forms a Glycyl lysine isopeptide (Lys-Gly) (interchain with G-Cter in SUMO2) linkage. Ser123 bears the Phosphoserine mark. The CSD 2; truncated domain occupies 136 to 179 (VFYLTYTSEDVEGNVQLETGDKINFVIDNNKHTGAVSARNIMLL). In terms of domain architecture, CSD 3 spans 186–245 (YQGVVCAMKEAFGFIERGDVVKEIFFHYSEFKGDLETLQPGDDVEFTIKDRNGKEVATDV). Ser276 carries the post-translational modification Phosphoserine. The CSD 4; truncated domain maps to 297–337 (LPFGDKDTKSKVTLLEGDHVRFNISTDRRDKLERATNIEVL). CSD domains are found at residues 349–410 (EMGV…AIRI) and 447–507 (NKGK…ATCV). Ser514 carries the phosphoserine modification. Residues 519 to 579 (LLGYVATLKD…KGNKVSAEKV (61 aa)) form the CSD 7 domain. Ser584 carries the phosphoserine modification. CSD domains are found at residues 610 to 670 (PTQI…AYNI) and 674 to 735 (RRAT…ACNV). Positions 748 to 789 (PRPDRLVNRLKNITLDDASAPRLMVLRQPRGPDNSMGFGAER) constitute an SUZ-C domain. Thr761 carries the phosphothreonine modification.

This sequence belongs to the UNR family. Component of a multi subunit autoregulatory ribonucleoprotein complex (ARC), at least composed of IGF2BP1, PABPC1 and CSDE1. Interacts with STRAP. Part of a complex associated with the FOS mCRD domain and consisting of PABPC1, PAIP1, HNRPD and SYNCRIP. The interaction with PABPC1 is direct and RNA-independent. Interacts with EIF4ENIF1/4E-T.

Its subcellular location is the cytoplasm. It localises to the stress granule. It is found in the P-body. Its function is as follows. RNA-binding protein involved in translationally coupled mRNA turnover. Implicated with other RNA-binding proteins in the cytoplasmic deadenylation/translational and decay interplay of the FOS mRNA mediated by the major coding-region determinant of instability (mCRD) domain. Required for efficient formation of stress granules. This Rattus norvegicus (Rat) protein is Cold shock domain-containing protein E1.